A 159-amino-acid polypeptide reads, in one-letter code: MSITGQPHVYKKDTIIRLKPLSLNSNNRSYVFSSSKGNIQNIINHLNNLNEIVGRSLLGIWKINSYFGLSKDPSESKSKNPSVFNTAKTIFKSGGVDYSSQLKEIKSLLEAQNTRIKSLENAIQSLDNKIEPEPLTKEEVKELKESINSIKEGLKNIIG.

This sequence belongs to the caulimoviridae ORF II family.

In terms of biological role, this protein is involved in virus transmission. The protein is Aphid transmission protein of Cauliflower mosaic virus (strain NY8153) (CaMV).